A 430-amino-acid polypeptide reads, in one-letter code: Serine--tRNA ligase (430 aa).

Residues 103-127 (LPNIPDDDVPDGRDENDNQEVSRWG) are disordered. 237–239 (TAE) serves as a coordination point for L-serine. 268 to 270 (RSE) contacts ATP. E291 contacts L-serine. 355–358 (EISS) contributes to the ATP binding site. Position 391 (S391) interacts with L-serine.

Belongs to the class-II aminoacyl-tRNA synthetase family. Type-1 seryl-tRNA synthetase subfamily. As to quaternary structure, homodimer. The tRNA molecule binds across the dimer.

Its subcellular location is the cytoplasm. It catalyses the reaction tRNA(Ser) + L-serine + ATP = L-seryl-tRNA(Ser) + AMP + diphosphate + H(+). The enzyme catalyses tRNA(Sec) + L-serine + ATP = L-seryl-tRNA(Sec) + AMP + diphosphate + H(+). Its pathway is aminoacyl-tRNA biosynthesis; selenocysteinyl-tRNA(Sec) biosynthesis; L-seryl-tRNA(Sec) from L-serine and tRNA(Sec): step 1/1. In terms of biological role, catalyzes the attachment of serine to tRNA(Ser). Is also able to aminoacylate tRNA(Sec) with serine, to form the misacylated tRNA L-seryl-tRNA(Sec), which will be further converted into selenocysteinyl-tRNA(Sec). This Sodalis glossinidius (strain morsitans) protein is Serine--tRNA ligase.